The chain runs to 128 residues: Fluoride-specific ion channel FluC (128 aa).

Transmembrane regions (helical) follow at residues leucine 4–isoleucine 24, glycine 39–methionine 59, phenylalanine 71–isoleucine 91, and isoleucine 99–isoleucine 119. Glycine 78 and threonine 81 together coordinate Na(+).

Belongs to the fluoride channel Fluc/FEX (TC 1.A.43) family.

The protein resides in the cell membrane. It catalyses the reaction fluoride(in) = fluoride(out). Na(+) is not transported, but it plays an essential structural role and its presence is essential for fluoride channel function. In terms of biological role, fluoride-specific ion channel. Important for reducing fluoride concentration in the cell, thus reducing its toxicity. This chain is Fluoride-specific ion channel FluC, found in Clostridium perfringens (strain ATCC 13124 / DSM 756 / JCM 1290 / NCIMB 6125 / NCTC 8237 / Type A).